Reading from the N-terminus, the 279-residue chain is HTH-type transcriptional regulator HdfR (279 aa).

An HTH lysR-type domain is found at 1–58 (MDTELLKTFLEVSRTRHFGRAAESLYLTQSAVSFRIRQLENQLGVNLFTRHRNNIRLT). Positions 18–37 (FGRAAESLYLTQSAVSFRIR) form a DNA-binding region, H-T-H motif.

It belongs to the LysR transcriptional regulatory family.

Its function is as follows. Negatively regulates the transcription of the flagellar master operon flhDC by binding to the upstream region of the operon. This is HTH-type transcriptional regulator HdfR from Escherichia fergusonii (strain ATCC 35469 / DSM 13698 / CCUG 18766 / IAM 14443 / JCM 21226 / LMG 7866 / NBRC 102419 / NCTC 12128 / CDC 0568-73).